We begin with the raw amino-acid sequence, 146 residues long: Large ribosomal subunit protein uL15 (146 aa).

The span at 1 to 13 (MKLHELKPAEGSR) shows a compositional bias: basic and acidic residues. The disordered stretch occupies residues 1–51 (MKLHELKPAEGSRKVRNRVGRGIGSGNGKTAGRGHKGQNARSGGGVRLGFE). Composition is skewed to gly residues over residues 21–31 (RGIGSGNGKTA) and 42–51 (SGGGVRLGFE).

The protein belongs to the universal ribosomal protein uL15 family. Part of the 50S ribosomal subunit.

Functionally, binds to the 23S rRNA. This chain is Large ribosomal subunit protein uL15, found in Bacillus mycoides (strain KBAB4) (Bacillus weihenstephanensis).